The chain runs to 391 residues: UPF0229 protein BCA_0588 (391 aa).

The segment covering 1-16 (MGEENQPNYTISQENW) has biased composition (polar residues). 2 disordered regions span residues 1 to 31 (MGEE…RHQE) and 80 to 117 (HVGQ…GDAA). Positions 21 to 31 (KGYDDQQRHQE) are enriched in basic and acidic residues. Over residues 98–115 (GSGGQKQKGPGKGQGAGD) the composition is skewed to gly residues.

The protein belongs to the UPF0229 family.

This Bacillus cereus (strain 03BB102) protein is UPF0229 protein BCA_0588.